The chain runs to 162 residues: Endoribonuclease YbeY (162 aa).

Zn(2+)-binding residues include H128, H132, and H138.

Belongs to the endoribonuclease YbeY family. The cofactor is Zn(2+).

The protein localises to the cytoplasm. Single strand-specific metallo-endoribonuclease involved in late-stage 70S ribosome quality control and in maturation of the 3' terminus of the 16S rRNA. In Lactococcus lactis subsp. cremoris (strain MG1363), this protein is Endoribonuclease YbeY.